Reading from the N-terminus, the 969-residue chain is Activity-dependent neuroprotective protein a (969 aa).

Residues 74-97 (FCCSDCPFASKYFSAYKNHFRNVH) form a C2H2-type 1 zinc finger. The C2H2-type 2; atypical zinc-finger motif lies at 107 to 129 (LNCSYCTYSGNKRTLETHVRLFH). 2 C2H2-type zinc fingers span residues 169–192 (YYCKKCTYRDRLYNVVRRHIYREH) and 221–244 (IHCKSCHFTPRSYEALVQHVIEFH). A C2H2-type 5; atypical zinc finger spans residues 401–423 (KICTICNELFPESAYSAHFEKEH). The segment at 443-464 (SKCLYCNRYLPSDSLLNHMLVH) adopts a C2H2-type 6; atypical zinc-finger fold. The C2H2-type 7 zinc finger occupies 466 to 489 (LSCPHCHSTFHEVEKIVAHNRLAH). The segment at 583 to 608 (TLCPLCFTILKGPISDALAHHLRDSH) adopts a C2H2-type 8; atypical zinc-finger fold. The C2H2-type 9; atypical zinc finger occupies 623-647 (YKCIHCLGVYTSNMTASTITLHLVH). A disordered region spans residues 659–689 (KPITTGLRSPGAGSLKRELVTPDPSDPKRRK). The segment at residues 732–774 (AYFNRHPYPSQREVEKLAASLWLWKSDVASHFGNHRRLCDRDF) is a DNA-binding region (homeobox). Positions 911–949 (DVRANRSSPRVGPKVLDGSVSSSSPDEATWSGNMSSEES) are disordered. Polar residues predominate over residues 929–946 (SVSSSSPDEATWSGNMSS).

As to quaternary structure, interacts with catenin beta-1/ctnnb1.

Its subcellular location is the nucleus. May be involved in transcriptional regulation. Positively modulates wnt-beta-catenin/ctnnb1 signaling. Required for embryonic neurogenesis. Required for progression through late erythroid differentiation. The protein is Activity-dependent neuroprotective protein a of Danio rerio (Zebrafish).